The primary structure comprises 185 residues: Threonylcarbamoyl-AMP synthase (185 aa).

Residues S4–G185 form the YrdC-like domain.

It belongs to the SUA5 family. TsaC subfamily.

The protein resides in the cytoplasm. The enzyme catalyses L-threonine + hydrogencarbonate + ATP = L-threonylcarbamoyladenylate + diphosphate + H2O. Its function is as follows. Required for the formation of a threonylcarbamoyl group on adenosine at position 37 (t(6)A37) in tRNAs that read codons beginning with adenine. Catalyzes the conversion of L-threonine, HCO(3)(-)/CO(2) and ATP to give threonylcarbamoyl-AMP (TC-AMP) as the acyladenylate intermediate, with the release of diphosphate. The polypeptide is Threonylcarbamoyl-AMP synthase (Pseudomonas putida (strain ATCC 47054 / DSM 6125 / CFBP 8728 / NCIMB 11950 / KT2440)).